The chain runs to 520 residues: MVLMILPFIGSVSVSESLVALTTVCLVYLILKFFRTEIPEGLHRLPGPKPLPLIGNVLEVGNKPYLSLTAMSKRYGDVFRFRLGMRPSGCLSGSETVRKALIKQGDEFAGRPDLYSFRFINDGKSLAFSTDKAGVWRALRKLAYSALRSFSSLEESTPRDSCVLEEHSAKEGEYLYSNMLNAVMKVTGSFDPFRHIVVSVANVICGMCFGRRYGHNDQELLSLVNLSDPFGQVVGSGNPADFIPVLQFLPSTTMKNFMDINARFNKFVQKIVSEHYTTYDKDNIRDITDSLIDHCEDRKLDENANVQMSDEKIVGIVNDLFGAGFDTISTALSWSVMYLVAYPEIEERLYQELKENVGLDRTPLLCDRPNLPFLEAFILEIFRHSSFLPFTIPHCTSKDTSLNGYFIPKDTCVFINQWQINHDPELWKDPSSFNPDRFLSADGTELNKLEGEKVMVFGLGKRRCIGEVIARNGVFLFLAIIVQKLHFKTLPGEPLDMTPEYGLTMKHKRCHLRATMRASE.

Residue Phe230 coordinates substrate. Cys464 is a binding site for heme.

Belongs to the cytochrome P450 family. Heme serves as cofactor.

Its subcellular location is the endoplasmic reticulum membrane. The protein resides in the microsome membrane. The catalysed reaction is an organic molecule + reduced [NADPH--hemoprotein reductase] + O2 = an alcohol + oxidized [NADPH--hemoprotein reductase] + H2O + H(+). Cytochromes P450 are a group of heme-thiolate monooxygenases. In liver microsomes, this enzyme is involved in an NADPH-dependent electron transport pathway. It oxidizes a variety of structurally unrelated compounds, including steroids, fatty acids, and xenobiotics. The protein is Cytochrome P450 1A1 (cyp1a1) of Dicentrarchus labrax (European seabass).